A 310-amino-acid polypeptide reads, in one-letter code: Ribosomal RNA small subunit methyltransferase H (310 aa).

Residues 33 to 35, Asp-52, Phe-79, Asp-98, and Gln-105 each bind S-adenosyl-L-methionine; that span reads GGH.

Belongs to the methyltransferase superfamily. RsmH family.

It is found in the cytoplasm. It catalyses the reaction cytidine(1402) in 16S rRNA + S-adenosyl-L-methionine = N(4)-methylcytidine(1402) in 16S rRNA + S-adenosyl-L-homocysteine + H(+). In terms of biological role, specifically methylates the N4 position of cytidine in position 1402 (C1402) of 16S rRNA. This is Ribosomal RNA small subunit methyltransferase H from Campylobacter jejuni subsp. jejuni serotype O:23/36 (strain 81-176).